Reading from the N-terminus, the 475-residue chain is Bifunctional purple acid phosphatase 26 (475 aa).

The signal sequence occupies residues 1-30 (MNHLVIISVFLSSVLLLYRGESGITSSFIR). Residue asparagine 103 is glycosylated (N-linked (GlcNAc...) asparagine). Fe cation is bound by residues aspartate 162, aspartate 189, and tyrosine 192. Aspartate 189 provides a ligand contact to Zn(2+). Zn(2+)-binding residues include asparagine 227 and histidine 312. Substrate is bound at residue asparagine 227. Catalysis depends on histidine 322, which acts as the Proton donor. Histidine 349 is a binding site for Zn(2+). 349-351 (HVH) contacts substrate. Histidine 351 lines the Fe cation pocket. N-linked (GlcNAc...) asparagine glycosylation is found at asparagine 365 and asparagine 422.

The protein belongs to the metallophosphoesterase superfamily. Purple acid phosphatase family. As to quaternary structure, homodimer. It depends on Fe cation as a cofactor. Zn(2+) is required as a cofactor. Post-translationally, glycosylated. In terms of tissue distribution, expressed in roots, stems, leaves, flowers and siliques.

It localises to the vacuole. The enzyme catalyses a phosphate monoester + H2O = an alcohol + phosphate. The catalysed reaction is 2 a phenolic donor + H2O2 = 2 a phenolic radical donor + 2 H2O. Its activity is regulated as follows. Activated by Mg(2+), Co(2+), Mn(2+) and Ba(2+). Inhibited by Fe(2+), Cu(2+), Zn(2+), NaF, molybdate, arsenate, vanadate and inorganic phosphate. No effect of tartrate, Asp, Gln, glutathione, Asn, ascorbic acid and phosphite. Functionally, metallo-phosphoesterase involved in phosphate metabolism. Acid phosphatase activity with phosphoenolpyruvate, inorganic pyrophosphate, phenyl-phosphate and p-nitrophenyl-phosphate as the most effective substrates. No activity with phytic acid, phosphocholine or bis-p-nitrophenyl-phosphate. Has a peroxidase activity at alkaline pH. In Arabidopsis thaliana (Mouse-ear cress), this protein is Bifunctional purple acid phosphatase 26 (PAP26).